The following is a 434-amino-acid chain: N-acylneuraminate cytidylyltransferase (434 aa).

Met1 is subject to N-acetylmethionine. The disordered stretch occupies residues 1 to 42; it reads MDSVEKGAATSVSNPRGRPSRGRPPKLQRNSRGGQGRGVEKP. A BC1 motif motif is present at residues 15-31; sequence PRGRPSRGRPPKLQRNS. 2 positions are modified to omega-N-methylarginine: Arg37 and Arg52. Substrate contacts are provided by Arg52, Asn62, Arg111, Ser120, Ser122, and Gln143. The BC2 motif motif lies at 200 to 206; the sequence is KRPRRQD. The active site involves Arg201. Positions 269–276 match the BC3 motif motif; it reads KEKLKEIK.

Belongs to the CMP-NeuNAc synthase family. As to quaternary structure, homotetramer; the active enzyme is formed by a dimer of dimers.

The protein localises to the nucleus. It carries out the reaction an N-acylneuraminate + CTP = a CMP-N-acyl-beta-neuraminate + diphosphate. It participates in amino-sugar metabolism; N-acetylneuraminate metabolism. Functionally, catalyzes the activation of N-acetylneuraminic acid (NeuNAc) to cytidine 5'-monophosphate N-acetylneuraminic acid (CMP-NeuNAc), a substrate required for the addition of sialic acid. Has some activity toward NeuNAc, N-glycolylneuraminic acid (Neu5Gc) or 2-keto-3-deoxy-D-glycero-D-galacto-nononic acid (KDN). This Bos taurus (Bovine) protein is N-acylneuraminate cytidylyltransferase (CMAS).